A 1176-amino-acid chain; its full sequence is Pesticidal crystal protein Cry1Ag (1176 aa).

It belongs to the delta endotoxin family.

Promotes colloidosmotic lysis by binding to the midgut epithelial cells of many lepidopteran larvae. This Bacillus thuringiensis protein is Pesticidal crystal protein Cry1Ag (cry1Ag).